Here is a 352-residue protein sequence, read N- to C-terminus: Photosystem II D2 protein (352 aa).

The chain crosses the membrane as a helical span at residues 40-60; the sequence is CAYLALGGWLTGTTFVTSWYT. His117 contributes to the chlorophyll a binding site. Residues 124–140 traverse the membrane as a helical segment; sequence GFMLRQFEIARLVGVRP. Pheophytin a contacts are provided by Gln129 and Asn142. A helical membrane pass occupies residues 152–165; sequence VFVSVFLIYPLGQS. His197 provides a ligand contact to chlorophyll a. The helical transmembrane segment at 207–227 threads the bilayer; sequence GALLCAIHGATVENTLYKDGE. Positions 214 and 261 each coordinate a plastoquinone. His214 contacts Fe cation. His268 is a Fe cation binding site. Residues 278–294 traverse the membrane as a helical segment; it reads GLWMSSIGVVGLALNLR.

Belongs to the reaction center PufL/M/PsbA/D family. In terms of assembly, PSII is composed of 1 copy each of membrane proteins PsbA, PsbB, PsbC, PsbD, PsbE, PsbF, PsbH, PsbI, PsbJ, PsbK, PsbL, PsbM, PsbT, PsbX, PsbY, PsbZ, Psb30/Ycf12, peripheral proteins PsbO, CyanoQ (PsbQ), PsbU, PsbV and a large number of cofactors. It forms dimeric complexes. The D1/D2 heterodimer binds P680, chlorophylls that are the primary electron donor of PSII, and subsequent electron acceptors. It shares a non-heme iron and each subunit binds pheophytin, quinone, additional chlorophylls, carotenoids and lipids. There is also a Cl(-1) ion associated with D1 and D2, which is required for oxygen evolution. The PSII complex binds additional chlorophylls, carotenoids and specific lipids. is required as a cofactor.

Its subcellular location is the cellular thylakoid membrane. The enzyme catalyses 2 a plastoquinone + 4 hnu + 2 H2O = 2 a plastoquinol + O2. Photosystem II (PSII) is a light-driven water:plastoquinone oxidoreductase that uses light energy to abstract electrons from H(2)O, generating O(2) and a proton gradient subsequently used for ATP formation. It consists of a core antenna complex that captures photons, and an electron transfer chain that converts photonic excitation into a charge separation. The D1/D2 (PsbA/PsbD) reaction center heterodimer binds P680, the primary electron donor of PSII as well as several subsequent electron acceptors. D2 is needed for assembly of a stable PSII complex. This is Photosystem II D2 protein from Synechococcus sp. (strain JA-3-3Ab) (Cyanobacteria bacterium Yellowstone A-Prime).